The primary structure comprises 173 residues: NADH-ubiquinone oxidoreductase chain 6 (173 aa).

Helical transmembrane passes span methionine 1 to serine 21, phenylalanine 27 to glycine 47, leucine 53 to leucine 73, tryptophan 82 to glycine 102, tyrosine 106 to leucine 126, and glycine 141 to isoleucine 161.

This sequence belongs to the complex I subunit 6 family.

The protein localises to the mitochondrion membrane. It catalyses the reaction a ubiquinone + NADH + 5 H(+)(in) = a ubiquinol + NAD(+) + 4 H(+)(out). Functionally, core subunit of the mitochondrial membrane respiratory chain NADH dehydrogenase (Complex I) that is believed to belong to the minimal assembly required for catalysis. Complex I functions in the transfer of electrons from NADH to the respiratory chain. The immediate electron acceptor for the enzyme is believed to be ubiquinone. This is NADH-ubiquinone oxidoreductase chain 6 (MT-ND6) from Latimeria chalumnae (Coelacanth).